A 301-amino-acid polypeptide reads, in one-letter code: Peroxisome assembly protein 26 (301 aa).

The Cytoplasmic portion of the chain corresponds to 1–246 (MKNDSSTSAA…DAAASHLLSQ (246 aa)). A helical; Signal-anchor for type II membrane protein membrane pass occupies residues 247 to 263 (PFKKSLLAALILCLLVL). Over 264-301 (RFDPATPSSLPFLYQLAHLFRRIQKATLSRLYPLALRD) the chain is Peroxisomal.

Belongs to the peroxin-26 family. Interacts directly with PEX6 via its cytoplasmic domain. Interacts indirectly with PEX1, via its interaction with PEX6.

Its subcellular location is the peroxisome membrane. Peroxisomal docking factor that anchors PEX1 and PEX6 to peroxisome membranes. It is therefore required for the formation of the PEX1-PEX6 AAA ATPase complex, a complex that mediates the extraction of the PEX5 receptor from peroxisomal membrane. The protein is Peroxisome assembly protein 26 (Pex26) of Cricetulus griseus (Chinese hamster).